Reading from the N-terminus, the 419-residue chain is Cell division protein FtsZ (419 aa).

Residues 22 to 26 (GGGGN), 109 to 111 (GSG), Glu-140, Arg-144, and Asp-188 contribute to the GTP site. The disordered stretch occupies residues 397–419 (ERFEAPISQDEDELDTPPFFKNR).

It belongs to the FtsZ family. Homodimer. Polymerizes to form a dynamic ring structure in a strictly GTP-dependent manner. Interacts directly with several other division proteins. Interacts with CcrZ; the interaction is direct.

It is found in the cytoplasm. Its function is as follows. Essential cell division protein that forms a contractile ring structure (Z ring) at the future cell division site. The regulation of the ring assembly controls the timing and the location of cell division. One of the functions of the FtsZ ring is to recruit other cell division proteins to the septum to produce a new cell wall between the dividing cells. Binds GTP and shows GTPase activity. The polypeptide is Cell division protein FtsZ (Streptococcus pneumoniae serotype 2 (strain D39 / NCTC 7466)).